The primary structure comprises 1940 residues: Myosin-3 (1940 aa).

In terms of domain architecture, Myosin N-terminal SH3-like spans 33 to 82 (DAKTYCFVVDSKEEYVKGKIKSSQDGKVTVETEDSRTLVVKPEDVYAMNP). The Myosin motor domain occupies 86–779 (DKIEDMAMLT…LLGTLEEMRD (694 aa)). Position 130 is an N6,N6,N6-trimethyllysine (lysine 130). 179–186 (GESGAGKT) lines the ATP pocket. Actin-binding regions lie at residues 656–678 (LNKL…IPNE) and 758–772 (KFGH…GLLG). Residues 782 to 811 (LAKLITRTQAVCRGFLMRVEFQKMMQRRES) enclose the IQ domain. Positions 841 to 1928 (LKSAETEKEM…NKLRAKTRDF (1088 aa)) form a coiled coil. The disordered stretch occupies residues 1260 to 1289 (ARGKNEEMQRSLSELTTQKSRLQTEAGELS). The segment covering 1269-1282 (RSLSELTTQKSRLQ) has biased composition (polar residues).

This sequence belongs to the TRAFAC class myosin-kinesin ATPase superfamily. Myosin family. As to quaternary structure, muscle myosin is a hexameric protein that consists of 2 heavy chain subunits (MHC), 2 alkali light chain subunits (MLC) and 2 regulatory light chain subunits (MLC-2).

It localises to the cytoplasm. The protein localises to the myofibril. Functionally, muscle contraction. The protein is Myosin-3 (Myh3) of Mus musculus (Mouse).